The chain runs to 322 residues: Putative membrane-bound redox modulator Alx (322 aa).

The Periplasmic portion of the chain corresponds to 1–6 (MNTVGT). A helical transmembrane segment spans residues 7–27 (PLLWGGFAVVVVIMLSIDLLL). The Cytoplasmic portion of the chain corresponds to 28 to 43 (QGRRGAHAMSMKQAAG). Residues 44 to 64 (WSILWVTLSLLFNAAFWWYLA) form a helical membrane-spanning segment. At 65-89 (ETQGREVADPQALAFLTGYLIEKSL) the chain is on the periplasmic side. Residues 90 to 110 (AVDNVFVWLMLFSYFSVPPAL) traverse the membrane as a helical segment. At 111–113 (QRR) the chain is on the cytoplasmic side. The helical transmembrane segment at 114 to 134 (VLVYGVLGAIVLRTIMIFAGT) threads the bilayer. Position 135 (W135) is a topological domain, periplasmic. A helical membrane pass occupies residues 136 to 156 (LITQFEWLLYVFGAFLLFTGV). Residues 157-198 (KMALAKEDESGIGEKPMVRWLRGHLRMTDTIENEHFFVRKNG) lie on the Cytoplasmic side of the membrane. A helical transmembrane segment spans residues 199–219 (LLYATPLLLVLIMVEFSDVIF). Residues 220-225 (AVDSIP) are Periplasmic-facing. Residues 226 to 246 (AIFAVTTDPFIVLTSNLFAIL) traverse the membrane as a helical segment. Residues 247-261 (GLRAMYFLLSGVAER) lie on the Cytoplasmic side of the membrane. A helical transmembrane segment spans residues 262-282 (FSMLKYGLAVILVFIGIKMLI). Residues 283–286 (VDFY) lie on the Periplasmic side of the membrane. A helical membrane pass occupies residues 287-307 (HIPIAISLGVVFGILTITLVI). At 308–321 (NTWVNHQRDKKLRA) the chain is on the cytoplasmic side.

It belongs to the TerC family.

Its subcellular location is the cell inner membrane. Has been proposed to be a redox modulator. The sequence is that of Putative membrane-bound redox modulator Alx (alx) from Salmonella typhi.